Here is a 449-residue protein sequence, read N- to C-terminus: Bifunctional F420 biosynthesis protein FbiB (449 aa).

The tract at residues 1–245 (MSPAGEHGTA…PGTEDLFWLG (245 aa)) is coenzyme F420:L-glutamate ligase. GTP is bound by residues 21-24 (LPEF), Ser51, and Lys56. Asp110 serves as a coordination point for a divalent metal cation. Residue Asn113 coordinates GTP. Residues Asp151 and Thr152 each coordinate a divalent metal cation. The segment at 246 to 449 (TAEAIELGRR…ADPGDLLIRK (204 aa)) is dehydro-coenzyme F420-0 reductase. Residues 261 to 265 (RRSVR) and Ala289 each bind FMN. A coenzyme F420-(gamma-Glu)n-binding site is contributed by Asp321. Positions 400 and 437 each coordinate FMN.

The protein in the N-terminal section; belongs to the CofE family. Requires Mg(2+) as cofactor. The cofactor is Mn(2+). It depends on K(+) as a cofactor.

The enzyme catalyses oxidized coenzyme F420-0 + GTP + L-glutamate = oxidized coenzyme F420-1 + GDP + phosphate + H(+). It catalyses the reaction oxidized coenzyme F420-1 + GTP + L-glutamate = oxidized coenzyme F420-2 + GDP + phosphate + H(+). It carries out the reaction oxidized coenzyme F420-(gamma-L-Glu)(n) + GTP + L-glutamate = oxidized coenzyme F420-(gamma-L-Glu)(n+1) + GDP + phosphate + H(+). The catalysed reaction is oxidized coenzyme F420-0 + FMN + H(+) = dehydro coenzyme F420-0 + FMNH2. It functions in the pathway cofactor biosynthesis; coenzyme F420 biosynthesis. Functionally, bifunctional enzyme that catalyzes the GTP-dependent successive addition of multiple gamma-linked L-glutamates to the L-lactyl phosphodiester of 7,8-didemethyl-8-hydroxy-5-deazariboflavin (F420-0) to form polyglutamated F420 derivatives, and the FMNH2-dependent reduction of dehydro-F420-0 to form F420-0. In Mycobacterium avium (strain 104), this protein is Bifunctional F420 biosynthesis protein FbiB.